Here is a 270-residue protein sequence, read N- to C-terminus: 4-hydroxy-4-methyl-2-oxoglutarate aldolase tasA (270 aa).

His-49 serves as the catalytic Proton acceptor. 2 residues coordinate a divalent metal cation: Glu-156 and Asp-182. Position 182 (Asp-182) interacts with substrate.

Belongs to the HpcH/HpaI aldolase family. In terms of assembly, homohexamer; trimer of dimers. It depends on Co(2+) as a cofactor. Mn(2+) serves as cofactor. The cofactor is Zn(2+). Fe(2+) is required as a cofactor. Requires Mg(2+) as cofactor.

It catalyses the reaction 4-hydroxy-4-methyl-2-oxoglutarate = 2 pyruvate. It functions in the pathway secondary metabolite biosynthesis. In terms of biological role, 4-hydroxy-4-methyl-2-oxoglutarate aldolase; part of the gene cluster that mediates the biosynthesis of the tetramic acids Sch210971 and Sch210972, potential anti-HIV fungal natural product that contain a decalin core. The PKS module of tasS together with the enoylreductase tasC catalyze the formation of the polyketide unit which is then conjugated to 4-hydroxyl-4-methyl glutamate (HMG) by the condensation domain of the tasS NRPS module. One unique structural feature of Sch210971 and Sch210972 is the tetramic acid motif proposed to be derived from the non-proteinogenic amino acid HMG, by a Dieckmann-type condensation catalyzed by the reductase domain of tasS. The aldolase tasA catalyzes the aldol condensation of 2 molecules of pyruvic acid to yield the intermediate 4-hydroxyl-4-methyl-2-oxoglutarate (HMOG), which can then be stereoselectively transaminated, may be by tasG, to form HMG. The Diels-Alderase tas3 then uses the Dieckmann product of tasS as substrate and catalyzes the Diels-Alder cycloaddition to form the decalin ring of Sch210971 and Sch210972. The chain is 4-hydroxy-4-methyl-2-oxoglutarate aldolase tasA from Hapsidospora irregularis.